We begin with the raw amino-acid sequence, 222 residues long: DnaJ homolog subfamily B member 9 (222 aa).

An N-terminal signal peptide occupies residues 1–23; sequence MATPQSVFVFAICILMITELILA. The J domain occupies 26–90; sequence SYYDILGVPK…HRRKEYDTVG (65 aa). A divergent targeting domain region spans residues 91 to 222; that stretch reads HTAFTNGKGQ…VTTYTDCSGQ (132 aa). Ser133 bears the Phosphoserine mark.

Interacts with HSPA5/BiP; interaction is direct. Interacts with ERN1/IRE1 (via the luminal region). Interacts with DERL1.

The protein localises to the endoplasmic reticulum lumen. In terms of biological role, co-chaperone for Hsp70 protein HSPA5/BiP that acts as a key repressor of the ERN1/IRE1-mediated unfolded protein response (UPR). J domain-containing co-chaperones stimulate the ATPase activity of Hsp70 proteins and are required for efficient substrate recognition by Hsp70 proteins. In the unstressed endoplasmic reticulum, interacts with the luminal region of ERN1/IRE1 and selectively recruits HSPA5/BiP: HSPA5/BiP disrupts the dimerization of the active ERN1/IRE1 luminal region, thereby inactivating ERN1/IRE1. Also involved in endoplasmic reticulum-associated degradation (ERAD) of misfolded proteins. Required for survival of B-cell progenitors and normal antibody production. This chain is DnaJ homolog subfamily B member 9, found in Cricetulus griseus (Chinese hamster).